The chain runs to 509 residues: Transcription factor atf-7 (509 aa).

Over residues 283 to 303 (TVSSYHSPLGASSQPPSTQKS) the composition is skewed to polar residues. 2 disordered regions span residues 283–318 (TVSS…EKQI) and 337–400 (NMSS…ILER). Positions 308-318 (SWDHINGEKQI) are enriched in basic and acidic residues. Over residues 337 to 364 (NMSSSGSDQDQSADMSNAGSTASTSTGN) the composition is skewed to low complexity. Basic and acidic residues predominate over residues 390-400 (PDERRNTILER). Residues 391-464 (DERRNTILER…TERESRCVCL (74 aa)) enclose the bZIP domain. Positions 393–413 (RRNTILERNKAAAVRYRKRKK) are basic motif. Positions 419 to 450 (MMGRVQAMEAEKNQLLAIQTQNQVLRRELERV) are leucine-zipper.

The protein belongs to the bZIP family. In terms of assembly, interacts with serine/threonine kinase pmk-1; perhaps in a manner dependent on dual specificity protein kinase sek-1. Expressed in intestinal cells.

The protein resides in the nucleus. Its subcellular location is the chromosome. Functionally, transcription factor which regulates the transcription of various genes, including those involved in innate immunity and oxidative stress responses. Binds to promoter regions of genes, probably at 5'-[GACGTCA]-3' consensus sequences. Together with transcription factor daf-19, involved in regulation of the serotonergic response of ADF neurons to pathogenic food. Modulates response to infection by the Gram-negative bacterium P.aeruginosa, acting downstream of the p38 signal transduction pathway effector serine/threonine kinase pmk-1. May act with transcription factor elt-2 to control p38 gene induction in response to bacterial infection. May be phosphorylated by pmk-1. Regulates transcription of the metallothionein gene, mtl-1, perhaps acting downstream of pmk-1. The protein is Transcription factor atf-7 of Caenorhabditis elegans.